The sequence spans 436 residues: Prenyltransferase nscD (436 aa).

The protein belongs to the tryptophan dimethylallyltransferase family.

It functions in the pathway secondary metabolite biosynthesis. Its function is as follows. Prenyltransferase; part of the gene cluster that mediates the biosynthesis of neosartoricin B, a prenylated anthracenone that probably exhibits T-cell antiproliferative activity, suggestive of a physiological role as an immunosuppressive agent. The non-reducing polyketide synthase nscA probably synthesizes and cyclizes the decaketide backbone. The hydrolase nscB then mediates the product release through hydrolysis followed by spontaneous decarboxylation. The prenyltransferase nscD catalyzes the addition of the dimethylallyl group to the aromatic C5. The FAD-dependent monooxygenase nscC is then responsible for the stereospecific hydroxylation at C2. Neosartoricin B can be converted into two additional compounds neosartoricins C and D. Neosartoricin C is a spirocyclic compound that is cyclized through the attack of C3 hydroxyl on C14, followed by dehydration. On the other hand, neosartoricin D is a further cyclized compound in which attack of C2 on C14 in neosartoricin C results in the formation of the acetal-containing dioxabicyclo-octanone ring. Both of these compounds are novel and possibly represent related metabolites of the gene cluster. The polypeptide is Prenyltransferase nscD (Trichophyton equinum (strain ATCC MYA-4606 / CBS 127.97) (Horse ringworm fungus)).